The following is a 207-amino-acid chain: Large ribosomal subunit protein uL4 (207 aa).

The tract at residues 45 to 89 is disordered; it reads RQGTHKVKTRSEVRGGGRKPWRQKGTGRARQGSIRSPQWRGGGTV. Basic residues predominate over residues 60–71; it reads GGRKPWRQKGTG.

The protein belongs to the universal ribosomal protein uL4 family. Part of the 50S ribosomal subunit.

Functionally, one of the primary rRNA binding proteins, this protein initially binds near the 5'-end of the 23S rRNA. It is important during the early stages of 50S assembly. It makes multiple contacts with different domains of the 23S rRNA in the assembled 50S subunit and ribosome. In terms of biological role, forms part of the polypeptide exit tunnel. The sequence is that of Large ribosomal subunit protein uL4 from Bacillus anthracis (strain A0248).